We begin with the raw amino-acid sequence, 491 residues long: Ketol-acid reductoisomerase (NADP(+)) (491 aa).

The 194-residue stretch at 15-208 folds into the KARI N-terminal Rossmann domain; it reads AQLGKCRFMA…GGHRAGVLES (194 aa). NADP(+) is bound by residues 45-48, R68, R76, S78, and 108-110; these read CGAQ and DKQ. H132 is an active-site residue. G158 lines the NADP(+) pocket. 2 KARI C-terminal knotted domains span residues 209-344 and 345-484; these read SFVA…TAPQ and YEGK…MTDM. Mg(2+) is bound by residues D217, E221, E389, and E393. Substrate is bound at residue S414.

This sequence belongs to the ketol-acid reductoisomerase family. Mg(2+) is required as a cofactor.

The catalysed reaction is (2R)-2,3-dihydroxy-3-methylbutanoate + NADP(+) = (2S)-2-acetolactate + NADPH + H(+). It carries out the reaction (2R,3R)-2,3-dihydroxy-3-methylpentanoate + NADP(+) = (S)-2-ethyl-2-hydroxy-3-oxobutanoate + NADPH + H(+). It functions in the pathway amino-acid biosynthesis; L-isoleucine biosynthesis; L-isoleucine from 2-oxobutanoate: step 2/4. Its pathway is amino-acid biosynthesis; L-valine biosynthesis; L-valine from pyruvate: step 2/4. Involved in the biosynthesis of branched-chain amino acids (BCAA). Catalyzes an alkyl-migration followed by a ketol-acid reduction of (S)-2-acetolactate (S2AL) to yield (R)-2,3-dihydroxy-isovalerate. In the isomerase reaction, S2AL is rearranged via a Mg-dependent methyl migration to produce 3-hydroxy-3-methyl-2-ketobutyrate (HMKB). In the reductase reaction, this 2-ketoacid undergoes a metal-dependent reduction by NADPH to yield (R)-2,3-dihydroxy-isovalerate. This chain is Ketol-acid reductoisomerase (NADP(+)), found in Klebsiella pneumoniae subsp. pneumoniae (strain ATCC 700721 / MGH 78578).